The sequence spans 193 residues: Imidazoleglycerol-phosphate dehydratase (193 aa).

It belongs to the imidazoleglycerol-phosphate dehydratase family.

Its subcellular location is the cytoplasm. The enzyme catalyses D-erythro-1-(imidazol-4-yl)glycerol 3-phosphate = 3-(imidazol-4-yl)-2-oxopropyl phosphate + H2O. Its pathway is amino-acid biosynthesis; L-histidine biosynthesis; L-histidine from 5-phospho-alpha-D-ribose 1-diphosphate: step 6/9. In Sulfolobus acidocaldarius (strain ATCC 33909 / DSM 639 / JCM 8929 / NBRC 15157 / NCIMB 11770), this protein is Imidazoleglycerol-phosphate dehydratase.